Reading from the N-terminus, the 160-residue chain is Cytochrome b6-f complex subunit 4 (160 aa).

At 1–35 (MATLKKPDLSDPKLRAKLAKGMGHNYYGEPAWPND) the chain is on the cytoplasmic side. A helical membrane pass occupies residues 36 to 56 (LLYVFPVVIMGTFACIVALSV). At 57–94 (LDPAMVGEPADPFATPLEILPEWYLYPVFQILRSVPNK) the chain is on the lumenal, thylakoid side. Residues 95-115 (LLGVLLMASVPLGLILVPFIE) form a helical membrane-spanning segment. Over 116 to 130 (NVNKFQNPFRRPVAT) the chain is Cytoplasmic. The chain crosses the membrane as a helical span at residues 131–151 (TIFLFGTLVTIWLGIGATFPL). The Lumenal, thylakoid segment spans residues 152–160 (DKTLTLGLF).

Belongs to the cytochrome b family. PetD subfamily. As to quaternary structure, the 4 large subunits of the cytochrome b6-f complex are cytochrome b6, subunit IV (17 kDa polypeptide, PetD), cytochrome f and the Rieske protein, while the 4 small subunits are PetG, PetL, PetM and PetN. The complex functions as a dimer.

The protein localises to the cellular thylakoid membrane. Component of the cytochrome b6-f complex, which mediates electron transfer between photosystem II (PSII) and photosystem I (PSI), cyclic electron flow around PSI, and state transitions. This chain is Cytochrome b6-f complex subunit 4, found in Mastigocladus laminosus (Fischerella sp.).